The following is a 71-amino-acid chain: Ceratotoxin-A (71 aa).

The first 23 residues, 1-23 (MANLKAVFLICIVAFIAFQCVVA), serve as a signal peptide directing secretion. 2 consecutive propeptides follow at residues 24-35 (EPAAEDSIVVKR) and 65-71 (VAAGLVG).

In terms of assembly, homomer of four to six subunits.

It is found in the secreted. In terms of biological role, female-specific peptides with potent activity against Gram-positive and Gram-negative bacteria. They have as well hemolytic activity. The chain is Ceratotoxin-A (CTXA2) from Ceratitis capitata (Mediterranean fruit fly).